The chain runs to 87 residues: Small ribosomal subunit protein bS20 (87 aa).

Residues 1-26 are disordered; the sequence is MANIKSAKKRAVQSEKARKHNASRRS.

This sequence belongs to the bacterial ribosomal protein bS20 family.

Functionally, binds directly to 16S ribosomal RNA. The polypeptide is Small ribosomal subunit protein bS20 (Salmonella typhi).